A 424-amino-acid polypeptide reads, in one-letter code: O-methyltransferase bfoD (424 aa).

D275 is a binding site for S-adenosyl-L-methionine. H326 (proton acceptor) is an active-site residue.

This sequence belongs to the class I-like SAM-binding methyltransferase superfamily. Cation-independent O-methyltransferase family.

It participates in secondary metabolite biosynthesis. Functionally, cytochrome P450 monooxygenase; part of the gene cluster that mediates the biosynthesis of bifonsecin B, a dimeric gamma-naphthopyrone. The first step in the biosynthesis of bifonsecin B is the production of gamma-naphthopyrone precursor YWA1 by the non-reducing polyketide synthase albA, via condensation of one acetyl-CoA starter unit with 6 malonyl-CoA units. YWA1 is then methylated by bfoE at position C-6 to yield foncesin which is further methylated at position C-8 by bfoD to produce fonsecin B. A key enzyme in the biosynthetic pathway is the cytochrome P450 monooxygenase bfoB which catalyzes the oxidative dimerization of fonsecin B to bifonsecin B. Bfob also catalyzes the oxidative dimerization of rubrofusarin B into nigerone. The stereoselectivity of bfoB is influenced by the two natural monomeric substrates; homodimerization of fonsecin B yields a stereochemically pure biaryl, M-foncerine B, while rubrofusarin B yields a mixture of enantiomers M- and P-nigerone. In Aspergillus brasiliensis (strain CBS 101740 / IMI 381727 / IBT 21946), this protein is O-methyltransferase bfoD.